A 280-amino-acid polypeptide reads, in one-letter code: Chlorophyll a-b binding protein CP29 (280 aa).

The segment at 1–42 (MVFKFPTPPGTQKKAGTTATKPAPKATTKKVATSTGTRSGGV) is disordered. Val-2 carries the N-acetylvaline modification. The residue at position 7 (Thr-7) is a Phosphothreonine; in State 1 and State 2. The span at 10–37 (GTQKKAGTTATKPAPKATTKKVATSTGT) shows a compositional bias: low complexity. At Thr-17 the chain carries Phosphothreonine; in State 2. Thr-33 carries the phosphothreonine; in State 1 and State 2 modification. Tyr-47 provides a ligand contact to chlorophyll b. The chlorophyll a site is built by Phe-73 and Ser-79. At Ser-103 the chain carries Phosphoserine; in State 2. Glu-137 and His-140 together coordinate chlorophyll a. Transmembrane regions (helical) follow at residues 143–163 (WAML…VSWV) and 176–196 (AGLS…ILVG). Residues Ser-183, Glu-199, and Arg-202 each coordinate chlorophyll b. 4 residues coordinate chlorophyll a: Glu-238, His-241, Arg-243, and Gln-255. A helical transmembrane segment spans residues 244-264 (LAMVSFFGYGVQALSTGEGAL).

The protein belongs to the light-harvesting chlorophyll a/b-binding (LHC) protein family. The LHC complex consists of chlorophyll a-b binding proteins. Binds at least 14 chlorophylls (8 Chl-a and 6 Chl-b) and carotenoids such as lutein and neoxanthin. serves as cofactor. Post-translationally, reversible phosphorylation plays a role in the State transition process and determines the affinity of LHCII for PSI and PSII.

Its subcellular location is the plastid. It is found in the chloroplast thylakoid membrane. Its function is as follows. The light-harvesting complex (LHC) functions as a light receptor, it captures and delivers excitation energy to photosystems with which it is closely associated. CP29 facilitates the State 1 to State 2 transition, where State I is induced by excess photosystem I (PSI) light and State 2 is induced by excess photosystem II (PSII) light. The sequence is that of Chlorophyll a-b binding protein CP29 from Chlamydomonas reinhardtii (Chlamydomonas smithii).